A 1486-amino-acid chain; its full sequence is Chromosome partition protein MukB (1486 aa).

34 to 41 is an ATP binding site; the sequence is GGNGAGKS. Coiled-coil stretches lie at residues 326 to 418, 444 to 480, and 509 to 603; these read LEAD…QYNQ, LETF…QAYQ, and RHLA…RAPV. The tract at residues 666–783 is flexible hinge; that stretch reads PGGSEDQRLN…EVPLFGRAAR (118 aa). Coiled-coil stretches lie at residues 835-923, 977-1115, and 1209-1266; these read EAEI…AKLE, EMLS…TAKA, and VEAI…QNVS.

Belongs to the SMC family. MukB subfamily. As to quaternary structure, homodimerization via its hinge domain. Binds to DNA via its C-terminal region. Interacts, and probably forms a ternary complex, with MukE and MukF via its C-terminal region. The complex formation is stimulated by calcium or magnesium. Interacts with tubulin-related protein FtsZ.

It localises to the cytoplasm. The protein resides in the nucleoid. Plays a central role in chromosome condensation, segregation and cell cycle progression. Functions as a homodimer, which is essential for chromosome partition. Involved in negative DNA supercoiling in vivo, and by this means organize and compact chromosomes. May achieve or facilitate chromosome segregation by condensation DNA from both sides of a centrally located replisome during cell division. This chain is Chromosome partition protein MukB, found in Escherichia coli O6:K15:H31 (strain 536 / UPEC).